The sequence spans 379 residues: Presenilin-associated rhomboid-like protein, mitochondrial (379 aa).

The N-terminal 52 residues, 1–52 (MAWRGWAQRGWGCGQAWAASVGGRSCEELTAALTPPRLLGRRFNFFIQQKCG), are a transit peptide targeting the mitochondrion. The Mitochondrial matrix portion of the chain corresponds to 53–101 (FRKAPRKVEPRRSDTGTSGEAYKRSALIPPVEETVFYPSPYPIRSLIKP). Ser65 is modified (phosphoserine). The residue at position 69 (Thr69) is a Phosphothreonine. Ser70 carries the post-translational modification Phosphoserine. The helical transmembrane segment at 102 to 121 (LFFTVGFTGCAFGSAAIWQY) threads the bilayer. Over 122–167 (ESLKSRVQSYFDGIKADWLDSIRPQKEGDFRKEINKWWNNLSDGQR) the chain is Mitochondrial intermembrane. The chain crosses the membrane as a helical span at residues 168–187 (TVTGIIAANVLVFCLWRVPS). The Mitochondrial matrix segment spans residues 188–207 (LQRTMIRYFTSNPASKVLCS). The helical transmembrane segment at 208-230 (PMLLSTFSHFSLFHMAANMYVLW) threads the bilayer. Topologically, residues 231 to 244 (SFSSSIVNILGQEQ) are mitochondrial intermembrane. Residues 245 to 262 (FMAVYLSAGVISNFVSYV) traverse the membrane as a helical segment. The Mitochondrial matrix portion of the chain corresponds to 263 to 273 (GKVATGRYGPS). Residues 274-292 (LGASGAIMTVLAAVCTKIP) form a helical membrane-spanning segment. Ser277 serves as the catalytic Nucleophile. Topologically, residues 293–295 (EGR) are mitochondrial intermembrane. The chain crosses the membrane as a helical span at residues 296 to 318 (LAIIFLPMFTFTAGNALKAIIAM). Residues 319-332 (DTAGMILGWKFFDH) are Mitochondrial matrix-facing. A helical transmembrane segment spans residues 333 to 354 (AAHLGGALFGIWYVTYGHELIW). The active site involves His335. Residues 355–379 (KNREPLVKIWHEIRTNGPKKGGGSK) lie on the Mitochondrial intermembrane side of the membrane.

It belongs to the peptidase S54 family. In terms of assembly, interacts with PSEN1 and PSEN2. Binds OPA1. Post-translationally, P-beta is proteolytically processed (beta-cleavage) in a PARL-dependent manner.

It is found in the mitochondrion inner membrane. Its subcellular location is the nucleus. The enzyme catalyses Cleaves type-1 transmembrane domains using a catalytic dyad composed of serine and histidine that are contributed by different transmembrane domains.. Functionally, required for the control of apoptosis during postnatal growth. Essential for proteolytic processing of an antiapoptotic form of OPA1 which prevents the release of mitochondrial cytochrome c in response to intrinsic apoptotic signals. Required for the maturation of PINK1 into its 52kDa mature form after its cleavage by mitochondrial-processing peptidase (MPP). Promotes cleavage of serine/threonine-protein phosphatase PGAM5 in damaged mitochondria in response to loss of mitochondrial membrane potential. Mediates differential cleavage of PINK1 and PGAM5 depending on the health status of mitochondria, disassociating from PINK1 and associating with PGAM5 in response to mitochondrial membrane potential loss. Required for processing of CLPB into a form with higher protein disaggregase activity by removing an autoinhibitory N-terminal peptide. Promotes processing of DIABLO/SMAC in the mitochondrion which is required for DIABLO apoptotic activity. Also required for cleavage of STARD7 and TTC19. Promotes changes in mitochondria morphology regulated by phosphorylation of P-beta domain. The polypeptide is Presenilin-associated rhomboid-like protein, mitochondrial (PARL) (Pongo abelii (Sumatran orangutan)).